Consider the following 944-residue polypeptide: Calcium-transporting ATPase type 2C member 2 (944 aa).

Over 1-104 the chain is Cytoplasmic; that stretch reads MGRRLKFLQK…DNAEPVWKKY (104 aa). Residues 69-93 form an interaction with ORAI1 region; that stretch reads VDLDSGLSEFAVAQRRLVHGWNEFV. The chain crosses the membrane as a helical span at residues 105–125; sequence LDQFRNPLILLLLGSSVVSVL. At 126 to 127 the chain is on the extracellular side; the sequence is TK. A helical transmembrane segment spans residues 128-148; it reads EYEDAVSIALAVLIVVTVGFI. The Cytoplasmic portion of the chain corresponds to 149-229; the sequence is QEYRSEKSLE…EVEPCGKTDS (81 aa). A helical transmembrane segment spans residues 230–250; the sequence is PLADGGDLSTLSNVVFMGTLV. Residues 251 to 291 are Extracellular-facing; sequence QCGKGQGVVIGTGEQSQFGEVFKMMRAEETPKTPLQKSMDK. A Phosphothreonine modification is found at T262. S266 carries the post-translational modification Phosphoserine. Residues 292-312 traverse the membrane as a helical segment; sequence LGKQLTIFSFGIIGLLMLVGW. At 313 to 329 the chain is on the cytoplasmic side; the sequence is VQGKPFLSMFTVGVSLA. V330, A331, I333, and E335 together coordinate Ca(2+). The chain crosses the membrane as a helical span at residues 330–350; the sequence is VAAIPEGLPIVVMVTLVLGVL. The Extracellular segment spans residues 351–748; sequence RMAKKRVIVK…IAALSLITLS (398 aa). D377 serves as the catalytic 4-aspartylphosphate intermediate. Residues D672 and D676 each contribute to the Mg(2+) site. A helical membrane pass occupies residues 749–769; the sequence is TVCNLPSPLNAMQILWVNIIM. N766 and D770 together coordinate Ca(2+). Topologically, residues 770–802 are cytoplasmic; it reads DGPPAQSLGVEPVDRDALRRPPRSVGDTILNRA. The helical transmembrane segment at 803 to 823 threads the bilayer; that stretch reads LILRVLMSAAVIIGGTLFIFW. Topologically, residues 824–835 are extracellular; the sequence is REIPANGTSTPR. The chain crosses the membrane as a helical span at residues 836–853; sequence TTTMAFTCFVFFDLFNAL. Residues 854-872 are Cytoplasmic-facing; sequence SCRSQTKLIFEIGFFRNRM. Residues 873–893 form a helical membrane-spanning segment; the sequence is FLYSVLGSLLGQLAVIYAPPL. The Extracellular segment spans residues 894-903; sequence QKVFQTENLS. A helical transmembrane segment spans residues 904 to 924; it reads ALDLLLLTGLASSVFILSELL. The Cytoplasmic segment spans residues 925-944; the sequence is KLWEKFLSRARPTQMLPEAV.

This sequence belongs to the cation transport ATPase (P-type) (TC 3.A.3) family. Type IIA subfamily. In terms of assembly, interacts (via N-terminus) with ORAI1 (via N- and C-termini); this interaction regulates Ca(2+) influx at the plasma membrane. Expressed in hippocampal neurons (at protein level). Expressed in lactating mammary epithelium (at protein level).

It is found in the golgi apparatus. Its subcellular location is the trans-Golgi network membrane. The protein resides in the cell membrane. It localises to the basolateral cell membrane. It carries out the reaction Ca(2+)(in) + ATP + H2O = Ca(2+)(out) + ADP + phosphate + H(+). It catalyses the reaction Mn(2+)(in) + ATP + H2O = Mn(2+)(out) + ADP + phosphate + H(+). Functionally, ATP-driven pump that supplies the Golgi apparatus with Ca(2+) and Mn(2+) ions, both essential cofactors for processing and trafficking of newly synthesized proteins in the secretory pathway. Within a catalytic cycle, acquires Ca(2+) or Mn(2+) ions on the cytoplasmic side of the membrane and delivers them to the lumenal side. The transfer of ions across the membrane is coupled to ATP hydrolysis and is associated with a transient phosphorylation that shifts the pump conformation from inward-facing to outward-facing state. Induces Ca(2+) influx independently of its ATP-driven pump function. At the basolateral membrane of mammary epithelial cells, interacts with Ca(2+) channel ORAI1 and mediates Ca(2+) entry independently of the Ca(2+) content of endoplasmic reticulum or Golgi stores. May facilitate transepithelial transport of large quantities of Ca(2+) for milk secretion via activation of Ca(2+) influx channels at the plasma membrane and active Ca(2+) transport at the Golgi apparatus. This is Calcium-transporting ATPase type 2C member 2 from Mus musculus (Mouse).